A 749-amino-acid chain; its full sequence is uncharacterized protein (749 aa).

One can recognise a Helicase ATP-binding domain in the interval 63–243 (FQYVQKGESI…QLTGKPMRLV (181 aa)). 76–83 (TPTASGKT) serves as a coordination point for ATP. Positions 185 to 188 (DELH) match the DEVH box motif. In terms of domain architecture, Helicase C-terminal spans 276-430 (EVNELAKEFL…SARINPENLI (155 aa)).

Belongs to the helicase family.

This is an uncharacterized protein from Bacillus subtilis (strain 168).